The primary structure comprises 835 residues: Lon protease (835 aa).

Residues 4 to 224 enclose the Lon N-terminal domain; it reads LPYIAIRNQL…LAINMLINAI (221 aa). 412–419 is a binding site for ATP; the sequence is GPPGTGKT. The 184-residue stretch at 649–832 folds into the Lon proteolytic domain; it reads QPKAGVVNAL…DEIFKYIFEA (184 aa). Active-site residues include Ser738 and Lys781.

Belongs to the peptidase S16 family. As to quaternary structure, homohexamer. Organized in a ring with a central cavity.

Its subcellular location is the cytoplasm. It catalyses the reaction Hydrolysis of proteins in presence of ATP.. Its function is as follows. ATP-dependent serine protease that mediates the selective degradation of mutant and abnormal proteins as well as certain short-lived regulatory proteins. Required for cellular homeostasis and for survival from DNA damage and developmental changes induced by stress. Degrades polypeptides processively to yield small peptide fragments that are 5 to 10 amino acids long. Binds to DNA in a double-stranded, site-specific manner. In Metamycoplasma arthritidis (strain 158L3-1) (Mycoplasma arthritidis), this protein is Lon protease.